A 124-amino-acid chain; its full sequence is Small ribosomal subunit protein uS12 (124 aa).

A disordered region spans residues 1–22; that stretch reads MATINQLVRKPRKRKVAKSDVP. Residue Asp89 is modified to 3-methylthioaspartic acid. The disordered stretch occupies residues 101 to 124; it reads TLDTQGVQNRKQGRSKYGAKRPKS. Residues 111–124 show a composition bias toward basic residues; sequence KQGRSKYGAKRPKS.

The protein belongs to the universal ribosomal protein uS12 family. As to quaternary structure, part of the 30S ribosomal subunit. Contacts proteins S8 and S17. May interact with IF1 in the 30S initiation complex.

Functionally, with S4 and S5 plays an important role in translational accuracy. Interacts with and stabilizes bases of the 16S rRNA that are involved in tRNA selection in the A site and with the mRNA backbone. Located at the interface of the 30S and 50S subunits, it traverses the body of the 30S subunit contacting proteins on the other side and probably holding the rRNA structure together. The combined cluster of proteins S8, S12 and S17 appears to hold together the shoulder and platform of the 30S subunit. The sequence is that of Small ribosomal subunit protein uS12 from Marinobacter nauticus (strain ATCC 700491 / DSM 11845 / VT8) (Marinobacter aquaeolei).